The chain runs to 309 residues: Epidermal retinol dehydrogenase 2 (309 aa).

A helical transmembrane segment spans residues 11–31; that stretch reads LLVFLGKSLLSVLEALLFHVI. 44-68 lines the NADP(+) pocket; the sequence is LITGAGSGLGRLLALQFARLGAVLV. A substrate-binding site is contributed by Ser-177. Tyr-190 serves as the catalytic Proton acceptor. A helical membrane pass occupies residues 270-290; the sequence is FLYFIVFLKSILPIKTGILIA.

It belongs to the short-chain dehydrogenases/reductases (SDR) family.

The protein resides in the endoplasmic reticulum membrane. It carries out the reaction all-trans-retinol--[retinol-binding protein] + NAD(+) = all-trans-retinal--[retinol-binding protein] + NADH + H(+). The protein operates within cofactor metabolism; retinol metabolism. In terms of biological role, oxidoreductase with strong preference for NAD. Active in both the oxidative and reductive directions. Oxidizes all-trans-retinol in all-trans-retinaldehyde. No activity was detected with 11-cis-retinol or 11-cis-retinaldehyde as substrates with either NAD(+)/NADH or NADP(+)/NADPH. The chain is Epidermal retinol dehydrogenase 2 from Mus musculus (Mouse).